Consider the following 444-residue polypeptide: MKSDSPKTFHVKSFGCQMNVYDGERMAEMLGAEGYVPAADGADADLVVLNTCHIREKAAEKVYSDIGRLKRDDGSTPTIAVAGCVAQAEGAEIARRAPSVDVVVGPQAYHRLPELIARAERGEKAIDLDMPAESKFGALPKRSGNQRPTAFLTVQEGCDKFCTYCVVPYTRGAEISRPFADLIAEARALVAGGVREITLLGQNVNAWIGEDAKGRAIGLDGLIRELAKEDGLERIRYTTSHPNDMTDGLIVAHGEVDKLMPFLHLPVQAGSDRILAAMNRSHSVESYLKVIERVREARPDIAISGDFIVGFPGESEADFAATLDIVRATRYAMAYSFKYSRRPGTPAATMDDQIDEAVMNERLQRLQALLNEQQQAFNEATVGRTTRLLLERKGKREGQLIGKSPWLQSVHVTAPGLAIGDMIDVRITSAGPNSLGAEPLMAIA.

An MTTase N-terminal domain is found at 7 to 121 (KTFHVKSFGC…LPELIARAER (115 aa)). [4Fe-4S] cluster is bound by residues Cys16, Cys52, Cys84, Cys158, Cys162, and Cys165. Positions 144 to 376 (GNQRPTAFLT…QALLNEQQQA (233 aa)) constitute a Radical SAM core domain. One can recognise a TRAM domain in the interval 379–441 (EATVGRTTRL…PNSLGAEPLM (63 aa)).

Belongs to the methylthiotransferase family. MiaB subfamily. In terms of assembly, monomer. It depends on [4Fe-4S] cluster as a cofactor.

The protein localises to the cytoplasm. It carries out the reaction N(6)-dimethylallyladenosine(37) in tRNA + (sulfur carrier)-SH + AH2 + 2 S-adenosyl-L-methionine = 2-methylsulfanyl-N(6)-dimethylallyladenosine(37) in tRNA + (sulfur carrier)-H + 5'-deoxyadenosine + L-methionine + A + S-adenosyl-L-homocysteine + 2 H(+). In terms of biological role, catalyzes the methylthiolation of N6-(dimethylallyl)adenosine (i(6)A), leading to the formation of 2-methylthio-N6-(dimethylallyl)adenosine (ms(2)i(6)A) at position 37 in tRNAs that read codons beginning with uridine. This is tRNA-2-methylthio-N(6)-dimethylallyladenosine synthase from Sphingopyxis alaskensis (strain DSM 13593 / LMG 18877 / RB2256) (Sphingomonas alaskensis).